The primary structure comprises 162 residues: NADH-quinone oxidoreductase subunit I (162 aa).

2 consecutive 4Fe-4S ferredoxin-type domains span residues 53–83 and 93–122; these read LRRYPNGEERCIACKLCEAICPAQAITIEPE and RRYDLDMTKCIYCGLCQEACPVDAIVEGPN. Cys-63, Cys-66, Cys-69, Cys-73, Cys-102, Cys-105, Cys-108, and Cys-112 together coordinate [4Fe-4S] cluster.

The protein belongs to the complex I 23 kDa subunit family. In terms of assembly, NDH-1 is composed of 14 different subunits. Subunits NuoA, H, J, K, L, M, N constitute the membrane sector of the complex. The cofactor is [4Fe-4S] cluster.

It is found in the cell inner membrane. It carries out the reaction a quinone + NADH + 5 H(+)(in) = a quinol + NAD(+) + 4 H(+)(out). Functionally, NDH-1 shuttles electrons from NADH, via FMN and iron-sulfur (Fe-S) centers, to quinones in the respiratory chain. The immediate electron acceptor for the enzyme in this species is believed to be ubiquinone. Couples the redox reaction to proton translocation (for every two electrons transferred, four hydrogen ions are translocated across the cytoplasmic membrane), and thus conserves the redox energy in a proton gradient. The sequence is that of NADH-quinone oxidoreductase subunit I from Paramagnetospirillum magneticum (strain ATCC 700264 / AMB-1) (Magnetospirillum magneticum).